We begin with the raw amino-acid sequence, 71 residues long: General transcription factor IIH subunit 5 (71 aa).

Threonine 69 carries the phosphothreonine modification.

This sequence belongs to the TFB5 family. In terms of assembly, component of the 7-subunit TFIIH core complex composed of XPB/ERCC3, XPD/ERCC2, GTF2H1, GTF2H2, GTF2H3, GTF2H4 and GTF2H5, which is active in NER. The core complex associates with the 3-subunit CDK-activating kinase (CAK) module composed of CCNH/cyclin H, CDK7 and MNAT1 to form the 10-subunit holoenzyme (holo-TFIIH) active in transcription. Part of TBP-based Pol II pre-initiation complex (PIC), in which Pol II core assembles with general transcription factors and other specific initiation factors including GTF2E1, GTF2E2, GTF2F1, GTF2F2, TCEA1, ERCC2, ERCC3, GTF2H2, GTF2H3, GTF2H4, GTF2H5, GTF2A1, GTF2A2, GTF2B and TBP; this large multi-subunit PIC complex mediates DNA unwinding and targets Pol II core to the transcription start site where the first phosphodiester bond forms.

The protein localises to the nucleus. Its subcellular location is the cytoplasm. Its function is as follows. Component of the general transcription and DNA repair factor IIH (TFIIH) core complex, which is involved in general and transcription-coupled nucleotide excision repair (NER) of damaged DNA and, when complexed to CAK, in RNA transcription by RNA polymerase II. In NER, TFIIH acts by opening DNA around the lesion to allow the excision of the damaged oligonucleotide and its replacement by a new DNA fragment. In transcription, TFIIH has an essential role in transcription initiation. When the pre-initiation complex (PIC) has been established, TFIIH is required for promoter opening and promoter escape. Phosphorylation of the C-terminal tail (CTD) of the largest subunit of RNA polymerase II by the kinase module CAK controls the initiation of transcription. Necessary for the stability of the TFIIH complex and for the presence of normal levels of TFIIH in the cell. In Homo sapiens (Human), this protein is General transcription factor IIH subunit 5.